The primary structure comprises 587 residues: 2-succinyl-5-enolpyruvyl-6-hydroxy-3-cyclohexene-1-carboxylate synthase (587 aa).

Belongs to the TPP enzyme family. MenD subfamily. As to quaternary structure, homodimer. The cofactor is Mg(2+). Mn(2+) is required as a cofactor. Requires thiamine diphosphate as cofactor.

It carries out the reaction isochorismate + 2-oxoglutarate + H(+) = 5-enolpyruvoyl-6-hydroxy-2-succinyl-cyclohex-3-ene-1-carboxylate + CO2. Its pathway is quinol/quinone metabolism; 1,4-dihydroxy-2-naphthoate biosynthesis; 1,4-dihydroxy-2-naphthoate from chorismate: step 2/7. It functions in the pathway cofactor biosynthesis; phylloquinone biosynthesis. Its function is as follows. Catalyzes the thiamine diphosphate-dependent decarboxylation of 2-oxoglutarate and the subsequent addition of the resulting succinic semialdehyde-thiamine pyrophosphate anion to isochorismate to yield 2-succinyl-5-enolpyruvyl-6-hydroxy-3-cyclohexene-1-carboxylate (SEPHCHC). The sequence is that of 2-succinyl-5-enolpyruvyl-6-hydroxy-3-cyclohexene-1-carboxylate synthase from Prochlorococcus marinus (strain MIT 9215).